The chain runs to 451 residues: Tryptophan--tRNA ligase (451 aa).

ATP is bound by residues 10–12 (TTT) and 18–19 (GN). Residues 11-19 (TTGTPHLGN) carry the 'HIGH' region motif. Asp-143 is a binding site for L-tryptophan. ATP is bound by residues 155–157 (GRD), Leu-195, and 202–206 (KMSKS). The short motif at 202–206 (KMSKS) is the 'KMSKS' region element.

This sequence belongs to the class-I aminoacyl-tRNA synthetase family. In terms of assembly, homodimer.

The protein localises to the cytoplasm. It catalyses the reaction tRNA(Trp) + L-tryptophan + ATP = L-tryptophyl-tRNA(Trp) + AMP + diphosphate + H(+). Functionally, catalyzes the attachment of tryptophan to tRNA(Trp). This is Tryptophan--tRNA ligase from Bordetella bronchiseptica (strain ATCC BAA-588 / NCTC 13252 / RB50) (Alcaligenes bronchisepticus).